Here is a 174-residue protein sequence, read N- to C-terminus: Adenine phosphoribosyltransferase (174 aa).

This sequence belongs to the purine/pyrimidine phosphoribosyltransferase family. As to quaternary structure, homodimer.

The protein localises to the cytoplasm. It carries out the reaction AMP + diphosphate = 5-phospho-alpha-D-ribose 1-diphosphate + adenine. It functions in the pathway purine metabolism; AMP biosynthesis via salvage pathway; AMP from adenine: step 1/1. Its function is as follows. Catalyzes a salvage reaction resulting in the formation of AMP, that is energically less costly than de novo synthesis. The polypeptide is Adenine phosphoribosyltransferase (Lachnoclostridium phytofermentans (strain ATCC 700394 / DSM 18823 / ISDg) (Clostridium phytofermentans)).